The following is a 137-amino-acid chain: UPF0146 protein MJ0688 (137 aa).

It belongs to the UPF0146 family.

The sequence is that of UPF0146 protein MJ0688 from Methanocaldococcus jannaschii (strain ATCC 43067 / DSM 2661 / JAL-1 / JCM 10045 / NBRC 100440) (Methanococcus jannaschii).